A 424-amino-acid polypeptide reads, in one-letter code: MPDRAQVIIRIVPGGGTKTLQQIINQLEYLSRKGKLELQRSARHLDIPVPPDQIRELAQSWVTEAGIYDESQSDDDRQQDLTTHIIVSFPAGTDQTAAYEASREWAAEMFGSGYGGGRYNYLTAYHVDRDHPHLHVVVNRRELLGHGWLKISRRHPQLNYDGLRKKMAEISLRHGIVLDATSRAERGIAERPITYAEHRRLERMQAQKIQFEDTDFDETSPEEDRRDLSQSFDPFRSDPSTGEPDRATRHDKQPLEQHARFQESAGSSIKADARIRVSLESERSAQPSASKIPVIGHFGIETSYVAEASVRKRSGIFGTSRPVTDVAMHTVKRQQRSKRRNDEEAGPSGANRKGLKAAQVDSEANVGEQDTRDDSNKAADPVSASIGTEQPEASPKRPRDRHDGELGGRKRARGNRRDDGRGGT.

Disordered stretches follow at residues alanine 206–isoleucine 269 and arginine 321–threonine 424. A compositionally biased stretch (acidic residues) spans glutamate 212–proline 221. Residues glutamate 243–phenylalanine 261 are compositionally biased toward basic and acidic residues. Basic residues predominate over residues threonine 330–arginine 339. Composition is skewed to basic and acidic residues over residues serine 394–glycine 408 and asparagine 415–threonine 424.

Tumor formation by A.tumefaciens involves the transfer and integration of a defined segment (T-DNA) of Ti plasmid DNA into the plant nuclear genome. The virD operon encodes a site-specific endonuclease that cleaves at a unique site within both 24 bp direct repeats flanking the T-DNA. The protein is T-DNA border endonuclease VirD2 (virD2) of Rhizobium radiobacter (Agrobacterium tumefaciens).